The chain runs to 166 residues: Regulatory protein RecX (166 aa).

This sequence belongs to the RecX family.

The protein localises to the cytoplasm. Functionally, modulates RecA activity. This is Regulatory protein RecX from Shigella sonnei (strain Ss046).